Reading from the N-terminus, the 323-residue chain is Aspartate carbamoyltransferase catalytic subunit (323 aa).

Residues Arg-71 and Thr-72 each coordinate carbamoyl phosphate. An L-aspartate-binding site is contributed by Lys-99. 3 residues coordinate carbamoyl phosphate: Arg-121, His-151, and Gln-154. L-aspartate-binding residues include Arg-184 and Arg-239. Gly-280 and Pro-281 together coordinate carbamoyl phosphate.

The protein belongs to the aspartate/ornithine carbamoyltransferase superfamily. ATCase family. As to quaternary structure, heterododecamer (2C3:3R2) of six catalytic PyrB chains organized as two trimers (C3), and six regulatory PyrI chains organized as three dimers (R2).

The catalysed reaction is carbamoyl phosphate + L-aspartate = N-carbamoyl-L-aspartate + phosphate + H(+). The protein operates within pyrimidine metabolism; UMP biosynthesis via de novo pathway; (S)-dihydroorotate from bicarbonate: step 2/3. Functionally, catalyzes the condensation of carbamoyl phosphate and aspartate to form carbamoyl aspartate and inorganic phosphate, the committed step in the de novo pyrimidine nucleotide biosynthesis pathway. The sequence is that of Aspartate carbamoyltransferase catalytic subunit from Ralstonia pickettii (strain 12J).